A 33-amino-acid polypeptide reads, in one-letter code: rho operon leader peptide (33 aa).

Over residues 1 to 25 (MRSEQISGSSLNPSCRFSSAYSPVT) the composition is skewed to polar residues. Residues 1 to 33 (MRSEQISGSSLNPSCRFSSAYSPVTRQRKDMSR) form a disordered region.

The chain is rho operon leader peptide (rhoL) from Escherichia coli O157:H7.